The chain runs to 463 residues: Peptidylprolyl isomerase cyp7 (463 aa).

A PPIase cyclophilin-type domain is found at 11–166; sequence ATGTVILKTT…FPPKIISTEV (156 aa). The segment at 224 to 275 is disordered; that stretch reads VKKPLRQKTPVSRSSDTTTELSKDLISSSSSIHSTYSSAQTGLTSAKVSSDE. Over residues 232–243 the composition is skewed to polar residues; the sequence is TPVSRSSDTTTE. The span at 250 to 261 shows a compositional bias: low complexity; it reads SSSSSIHSTYSS. Residues 262–271 are compositionally biased toward polar residues; sequence AQTGLTSAKV.

The protein belongs to the cyclophilin-type PPIase family. CWC27 subfamily. As to quaternary structure, belongs to the 40S cdc5-associated complex (or cwf complex), a spliceosome sub-complex reminiscent of a late-stage spliceosome composed of the U2, U5 and U6 snRNAs and at least brr2, cdc5, cwf2/prp3, cwf3/syf1, cwf4/syf3, cwf5/ecm2, spp42/cwf6, cwf7/spf27, cwf8, cwf9, cwf10, cwf11, cwf12, prp45/cwf13, cwf14, cwf15, cwf16, cwf17, cwf18, cwf19, cwf20, cwf21, cwf22, cwf23, cwf24, cwf25, cwf26, cyp7/cwf27, cwf28, cwf29/ist3, lea1, msl1, prp5/cwf1, prp10, prp12/sap130, prp17, prp22, sap61, sap62, sap114, sap145, slu7, smb1, smd1, smd3, smf1, smg1 and syf2.

It localises to the cytoplasm. Its subcellular location is the nucleus. It catalyses the reaction [protein]-peptidylproline (omega=180) = [protein]-peptidylproline (omega=0). PPIases accelerate the folding of proteins. Catalyzes the cis-trans isomerization of proline imidic peptide bonds in oligopeptides. Involved in pre-mRNA splicing. The protein is Peptidylprolyl isomerase cyp7 (cyp7) of Schizosaccharomyces pombe (strain 972 / ATCC 24843) (Fission yeast).